The chain runs to 123 residues: Ragulator complex protein LAMTOR3-A (123 aa).

Belongs to the LAMTOR3 family. In terms of assembly, part of the Ragulator complex composed of lamtor1, lamtor2, lamtor3, lamtor4 and lamtor5. The Ragulator complex interacts with slc38a9; the probable amino acid sensor. Component of the lysosomal folliculin complex (LFC).

Its subcellular location is the late endosome membrane. Its function is as follows. As part of the Ragulator complex it is involved in amino acid sensing and activation of mTORC1, a signaling complex promoting cell growth in response to growth factors, energy levels, and amino acids. Activated by amino acids through a mechanism involving the lysosomal V-ATPase, the Ragulator plays a dual role for the small GTPases Rag (RagA/RRAGA, RagB/RRAGB, RagC/RRAGC and/or RagD/RRAGD): it (1) acts as a guanine nucleotide exchange factor (GEF), activating the small GTPases Rag and (2) mediates recruitment of Rag GTPases to the lysosome membrane. Activated Ragulator and Rag GTPases function as a scaffold recruiting mTORC1 to lysosomes where it is in turn activated. The sequence is that of Ragulator complex protein LAMTOR3-A (lamtor3-a) from Xenopus laevis (African clawed frog).